Reading from the N-terminus, the 312-residue chain is Very-long-chain 3-oxoacyl-CoA reductase-like protein At1g24470 (312 aa).

The chain crosses the membrane as a helical span at residues leucine 14–leucine 34. Glycine 52–leucine 81 contributes to the NADP(+) binding site. Serine 190 lines the substrate pocket. Catalysis depends on tyrosine 205, which acts as the Proton acceptor.

Belongs to the short-chain dehydrogenases/reductases (SDR) family. As to expression, expressed in green siliques, flowers, inflorescence stems and leaves. Not detected in roots.

It is found in the endoplasmic reticulum membrane. Functionally, probable reductase, but unlike KCR1, has no beta-ketoacyl-coenzyme A reductase activity. In Arabidopsis thaliana (Mouse-ear cress), this protein is Very-long-chain 3-oxoacyl-CoA reductase-like protein At1g24470 (KCR2).